The sequence spans 188 residues: Probable chemoreceptor glutamine deamidase CheD (188 aa).

The protein belongs to the CheD family.

It catalyses the reaction L-glutaminyl-[protein] + H2O = L-glutamyl-[protein] + NH4(+). Functionally, probably deamidates glutamine residues to glutamate on methyl-accepting chemotaxis receptors (MCPs), playing an important role in chemotaxis. This Caulobacter sp. (strain K31) protein is Probable chemoreceptor glutamine deamidase CheD.